The following is a 206-amino-acid chain: Cytochrome c oxidase assembly factor 8 (206 aa).

The transit peptide at 1–39 (MLPCAAGARGRGAMVVLRAGKKTFLPPLCRAFACRGCQL) directs the protein to the mitochondrion.

It belongs to the COA8 family. N-terminal mitochondrial targeting sequence is cleaved from the mature protein once in the mitochondrion. Post-translationally, in normal conditions, the cytoplasmic precursor protein is rapidly degraded by the ubiquitination-proteasome system (UPS). Oxidative stress induces protein stabilization and import into mitochondria where it protects COX from degradation. As to expression, expressed in fibroblasts.

The protein resides in the mitochondrion inner membrane. Functionally, required for cytochrome c complex (COX) IV assembly and function Protects COX assembly from oxidation-induced degradation, COX being the terminal component of the mitochondrial respiratory chain. The polypeptide is Cytochrome c oxidase assembly factor 8 (Homo sapiens (Human)).